The sequence spans 242 residues: ATP synthase subunit a (242 aa).

The next 6 membrane-spanning stretches (helical) occupy residues 29–49 (SSIY…LAFY), 84–104 (FIPL…LGMT), 114–134 (IIVT…VGFV), 140–160 (FLTL…MIVI), 181–201 (MAGH…MIYL), and 203–223 (FLPI…AILQ).

It belongs to the ATPase A chain family. In terms of assembly, F-type ATPases have 2 components, CF(1) - the catalytic core - and CF(0) - the membrane proton channel. CF(1) has five subunits: alpha(3), beta(3), gamma(1), delta(1), epsilon(1). CF(0) has three main subunits: a(1), b(2) and c(9-12). The alpha and beta chains form an alternating ring which encloses part of the gamma chain. CF(1) is attached to CF(0) by a central stalk formed by the gamma and epsilon chains, while a peripheral stalk is formed by the delta and b chains.

It is found in the cell membrane. In terms of biological role, key component of the proton channel; it plays a direct role in the translocation of protons across the membrane. This is ATP synthase subunit a from Rickettsia africae (strain ESF-5).